A 435-amino-acid chain; its full sequence is MRISKASLVRPGANEVYGIFALALSLFVFAYSARFGQVSILAYYGLWLPLVLVDYRKVLGNYASYLWIFAFTIFACITIFWSAAPSLSLRTGIQYLSHVVCALIAMRTIDIRTLTRGMIAGAAIVLLYSLLFGTYHYDPLDGTYSFVGAFASKNQLGFYASLGIYFAFAAVFVLGEKGLWMGAAGGAGLLAAYCLLTSQSATSVLTTAAVIGLCLGMRAITALRPASRKLLFIAASVFGGVAAVAMIYAGGVDLILGAFGKDSTLTGRTYLWQQGIEAAKVSPLVGVGYQAYWVQGFSEAERLWEEFYIGSRAGFHFHNTFIEAVVETGLIGLILLTMVLVTAFFGQLKRLLSEDRDPESMVLFGVGALLFVRAFVEIDILTPYHVGSFLLYFTAGKLTIPRRRRAATLLWPAGLDPAPYGRTFGPMIPRPGDSR.

The next 10 membrane-spanning stretches (helical) occupy residues 11–31, 35–55, 65–85, 117–137, 156–176, 178–198, 203–223, 230–250, 325–345, and 361–381; these read PGANEVYGIFALALSLFVFAY, FGQVSILAYYGLWLPLVLVDY, YLWIFAFTIFACITIFWSAAP, GMIAGAAIVLLYSLLFGTYHY, LGFYASLGIYFAFAAVFVLGE, GLWMGAAGGAGLLAAYCLLTS, SVLTTAAVIGLCLGMRAITAL, LLFIAASVFGGVAAVAMIYAG, VVETGLIGLILLTMVLVTAFF, and MVLFGVGALLFVRAFVEIDIL.

It is found in the cell membrane. Its pathway is glycan metabolism; exopolysaccharide biosynthesis. Functionally, involved in the production of exopolysaccharide. This is Exopolysaccharide production protein ExoQ (exoQ) from Rhizobium meliloti (strain 1021) (Ensifer meliloti).